A 185-amino-acid chain; its full sequence is Ribosome-recycling factor (185 aa).

Positions 137–158 are disordered; it reads DELKKLEKDHTASEDEVKRAQD.

The protein belongs to the RRF family.

It is found in the cytoplasm. In terms of biological role, responsible for the release of ribosomes from messenger RNA at the termination of protein biosynthesis. May increase the efficiency of translation by recycling ribosomes from one round of translation to another. The protein is Ribosome-recycling factor of Desulfitobacterium hafniense (strain Y51).